The primary structure comprises 393 residues: Serine/threonine protein kinase AFUB_078980 (393 aa).

A Protein kinase domain is found at Tyr61 to Leu390. ATP-binding positions include Leu67 to Val75 and Lys90. The active-site Proton acceptor is Asp190.

Belongs to the protein kinase superfamily. CMGC Ser/Thr protein kinase family.

The enzyme catalyses L-seryl-[protein] + ATP = O-phospho-L-seryl-[protein] + ADP + H(+). It carries out the reaction L-threonyl-[protein] + ATP = O-phospho-L-threonyl-[protein] + ADP + H(+). Functionally, serine/threonine protein kinase; part of the subtelomeric hrmA-associated cluster (HAC) containing genes that alter the hyphal surface (such as reduced total chitin or increased beta-glucan exposure) and perturb inter-hyphal interactions within the developing biofilms, resulting in a loss of vertically aligned polarized growing filaments. Consequently, this hypoxia-typic morphotype (called H-MORPH) with altered biofilm architecture leads to increased hypoxia fitness, increased host inflammation, rapid disease progression, and mortality in a murine model of invasive aspergillosis. This is Serine/threonine protein kinase AFUB_078980 from Aspergillus fumigatus (strain CBS 144.89 / FGSC A1163 / CEA10) (Neosartorya fumigata).